Consider the following 321-residue polypeptide: Ornithine carbamoyltransferase (321 aa).

Carbamoyl phosphate-binding positions include 53 to 56 (STRT), Gln-80, Arg-104, and 131 to 134 (HPCQ). L-ornithine-binding positions include Asn-166, Asp-230, and 234 to 235 (SM). Carbamoyl phosphate is bound by residues 270–271 (CL) and Arg-298.

The protein belongs to the aspartate/ornithine carbamoyltransferase superfamily. OTCase family.

It is found in the cytoplasm. The catalysed reaction is carbamoyl phosphate + L-ornithine = L-citrulline + phosphate + H(+). It participates in amino-acid biosynthesis; L-arginine biosynthesis; L-arginine from L-ornithine and carbamoyl phosphate: step 1/3. Its function is as follows. Reversibly catalyzes the transfer of the carbamoyl group from carbamoyl phosphate (CP) to the N(epsilon) atom of ornithine (ORN) to produce L-citrulline. The chain is Ornithine carbamoyltransferase from Bifidobacterium longum (strain NCC 2705).